Reading from the N-terminus, the 829-residue chain is G-type lectin S-receptor-like serine/threonine-protein kinase At1g34300 (829 aa).

The first 25 residues, 1-25 (MAVKTPFLKLLPLLLLLLHFPFSFS), serve as a signal peptide directing secretion. Bulb-type lectin domains lie at 26 to 140 (TIPL…SSFD) and 143 to 260 (TDTI…PVNA). The Extracellular segment spans residues 26–421 (TIPLGSVIYA…KGDDNNSKVH (396 aa)). 8 N-linked (GlcNAc...) asparagine glycosylation sites follow: N46, N98, N130, N151, N172, N178, N189, and N195. In terms of domain architecture, EGF-like spans 264–301 (AVDQCLVYGYCGNFGICSYNDTNPICSCPSRNFDFVDV). 5 disulfides stabilise this stretch: C268/C280, C274/C289, C317/C399, C350/C373, and C354/C360. Residues N283 and N320 are each glycosylated (N-linked (GlcNAc...) asparagine). Residues 317–399 (CSGNTTMLDL…VPSTSYVKVC (83 aa)) form the Apple domain. A glycan (N-linked (GlcNAc...) asparagine) is linked at N416. The helical transmembrane segment at 422-442 (LWIVAVAVIAGLLGLVAVEIG) threads the bilayer. Over 443-829 (LWWCCCRKNP…RISEGSMLGS (387 aa)) the chain is Cytoplasmic. Residues 484–759 (KSFKEKLGAG…GKVVQMLEGI (276 aa)) form the Protein kinase domain. ATP contacts are provided by residues 490–498 (LGAGGFGTV) and K512. Position 532 is a phosphoserine (S532). The interval 572–589 (DSAKFLTWEYRFNIALGT) is caM-binding. The active-site Proton acceptor is D608. Phosphoserine is present on residues S625 and S799.

Belongs to the protein kinase superfamily. Ser/Thr protein kinase family.

It localises to the cell membrane. It catalyses the reaction L-seryl-[protein] + ATP = O-phospho-L-seryl-[protein] + ADP + H(+). The enzyme catalyses L-threonyl-[protein] + ATP = O-phospho-L-threonyl-[protein] + ADP + H(+). The sequence is that of G-type lectin S-receptor-like serine/threonine-protein kinase At1g34300 from Arabidopsis thaliana (Mouse-ear cress).